Reading from the N-terminus, the 305-residue chain is MVDNLTHLKQLEAESIHIIREVAAEFDNPVMLYSIGKDSAVMLHLARKAFFPGKLPFPVMHVDTQWKFQEMYRFRDKMVEEMGLELITHVNPEGVAQGINPFTHGSSKHTDIMKTQGLKQALDKHGFDAAFGGARRDEEKSRAKERVYSFRDSKHRWDPKNQRPELWNIYNGKVNKGESIRVFPLSNWTELDIWQYIYLEGIPIVPLYFAAEREVIEKNGTLIMIDDERILEHLSDEEKARIVKKKVRFRTLGCYPLTGAVESEAETLTDIIQEMLLTRTSERQGRVIDHDGAGSMEDKKRQGYF.

The protein belongs to the PAPS reductase family. CysD subfamily. As to quaternary structure, heterodimer composed of CysD, the smaller subunit, and CysN.

It carries out the reaction sulfate + ATP + H(+) = adenosine 5'-phosphosulfate + diphosphate. Its pathway is sulfur metabolism; hydrogen sulfide biosynthesis; sulfite from sulfate: step 1/3. With CysN forms the ATP sulfurylase (ATPS) that catalyzes the adenylation of sulfate producing adenosine 5'-phosphosulfate (APS) and diphosphate, the first enzymatic step in sulfur assimilation pathway. APS synthesis involves the formation of a high-energy phosphoric-sulfuric acid anhydride bond driven by GTP hydrolysis by CysN coupled to ATP hydrolysis by CysD. This chain is Sulfate adenylyltransferase subunit 2, found in Pseudomonas entomophila (strain L48).